A 502-amino-acid polypeptide reads, in one-letter code: Capsid protein (502 aa).

Disordered stretches follow at residues 369–392 (ISEL…SDYD) and 405–487 (LTDS…TRKQ). Over residues 447 to 456 (SRRRKRRRRS) the composition is skewed to basic residues.

It belongs to the anelloviridae capsid protein family.

It localises to the virion. Functionally, self-assembles to form an icosahedral capsid with a T=1 symmetry, about 30 nm in diameter, and consisting of 60 capsid proteins. The capsid encapsulates the genomic DNA. Capsid protein is involved in attachment and entry into the host cell. This chain is Capsid protein, found in Tupaia.